The primary structure comprises 146 residues: Heat-stable 19 kDa antigen (146 aa).

A signal peptide spans 1-20 (MKFSLLSAIAAAVFVPFTSA).

The protein belongs to the cerato-platanin family. In terms of processing, glycosylated.

The protein resides in the secreted. The protein is Heat-stable 19 kDa antigen (CSA) of Coccidioides posadasii (strain C735) (Valley fever fungus).